We begin with the raw amino-acid sequence, 289 residues long: Phosphatidylserine decarboxylase proenzyme (289 aa).

Residues Asp92, His149, and Ser254 each act as charge relay system; for autoendoproteolytic cleavage activity in the active site. The active-site Schiff-base intermediate with substrate; via pyruvic acid; for decarboxylase activity is the Ser254. Pyruvic acid (Ser); by autocatalysis is present on Ser254.

Belongs to the phosphatidylserine decarboxylase family. PSD-B subfamily. Prokaryotic type I sub-subfamily. In terms of assembly, heterodimer of a large membrane-associated beta subunit and a small pyruvoyl-containing alpha subunit. The cofactor is pyruvate. In terms of processing, is synthesized initially as an inactive proenzyme. Formation of the active enzyme involves a self-maturation process in which the active site pyruvoyl group is generated from an internal serine residue via an autocatalytic post-translational modification. Two non-identical subunits are generated from the proenzyme in this reaction, and the pyruvate is formed at the N-terminus of the alpha chain, which is derived from the carboxyl end of the proenzyme. The autoendoproteolytic cleavage occurs by a canonical serine protease mechanism, in which the side chain hydroxyl group of the serine supplies its oxygen atom to form the C-terminus of the beta chain, while the remainder of the serine residue undergoes an oxidative deamination to produce ammonia and the pyruvoyl prosthetic group on the alpha chain. During this reaction, the Ser that is part of the protease active site of the proenzyme becomes the pyruvoyl prosthetic group, which constitutes an essential element of the active site of the mature decarboxylase.

The protein resides in the cell membrane. It carries out the reaction a 1,2-diacyl-sn-glycero-3-phospho-L-serine + H(+) = a 1,2-diacyl-sn-glycero-3-phosphoethanolamine + CO2. The protein operates within phospholipid metabolism; phosphatidylethanolamine biosynthesis; phosphatidylethanolamine from CDP-diacylglycerol: step 2/2. Its function is as follows. Catalyzes the formation of phosphatidylethanolamine (PtdEtn) from phosphatidylserine (PtdSer). The chain is Phosphatidylserine decarboxylase proenzyme from Pseudomonas aeruginosa (strain UCBPP-PA14).